The primary structure comprises 511 residues: Exodeoxyribonuclease 7 large subunit (511 aa).

Belongs to the XseA family. In terms of assembly, heterooligomer composed of large and small subunits.

Its subcellular location is the cytoplasm. It catalyses the reaction Exonucleolytic cleavage in either 5'- to 3'- or 3'- to 5'-direction to yield nucleoside 5'-phosphates.. Bidirectionally degrades single-stranded DNA into large acid-insoluble oligonucleotides, which are then degraded further into small acid-soluble oligonucleotides. The sequence is that of Exodeoxyribonuclease 7 large subunit from Brucella suis (strain ATCC 23445 / NCTC 10510).